A 361-amino-acid chain; its full sequence is D-alanine--D-alanine ligase (361 aa).

An ATP-grasp domain is found at K140 to A345. Residue E173–E228 coordinates ATP. Residues D299, E312, and N314 each contribute to the Mg(2+) site.

Belongs to the D-alanine--D-alanine ligase family. Mg(2+) is required as a cofactor. Requires Mn(2+) as cofactor.

Its subcellular location is the cytoplasm. The enzyme catalyses 2 D-alanine + ATP = D-alanyl-D-alanine + ADP + phosphate + H(+). Its pathway is cell wall biogenesis; peptidoglycan biosynthesis. Its function is as follows. Cell wall formation. In Bacillus licheniformis (strain ATCC 14580 / DSM 13 / JCM 2505 / CCUG 7422 / NBRC 12200 / NCIMB 9375 / NCTC 10341 / NRRL NRS-1264 / Gibson 46), this protein is D-alanine--D-alanine ligase.